We begin with the raw amino-acid sequence, 152 residues long: MKLILTADVDHLGSVGDTVEVKDGYGRNFLLPRGMAIVASRGAQKQADEIRRSRETKAVRDREHANEIKTAIQALGSVALPVKTAADSGKLFGSVTAGDVVAAIKKAGGPNLDKRIVRLAKAHIKAVGTHPVVMHLHPEIEVELSVDVVAES.

The protein belongs to the bacterial ribosomal protein bL9 family.

Functionally, binds to the 23S rRNA. This is Large ribosomal subunit protein bL9 from Mycobacterium ulcerans (strain Agy99).